The following is a 404-amino-acid chain: Ubiquitin-like modifier-activating enzyme 5 (404 aa).

Glycine 83, aspartate 104, lysine 127, asparagine 150, and asparagine 184 together coordinate ATP. Positions 226 and 229 each coordinate Zn(2+). Cysteine 250 (glycyl thioester intermediate) is an active-site residue. Residues cysteine 303 and cysteine 308 each coordinate Zn(2+). Residues 372 to 393 (APEKSSETSEETVTAATADETS) are disordered. Residues 382–391 (ETVTAATADE) show a composition bias toward low complexity.

The protein belongs to the ubiquitin-activating E1 family. UBA5 subfamily.

Functionally, E1-like enzyme which activates UFM1. The chain is Ubiquitin-like modifier-activating enzyme 5 from Drosophila simulans (Fruit fly).